Consider the following 691-residue polypeptide: Elongation factor G (691 aa).

Residues aspartate 8–isoleucine 282 enclose the tr-type G domain. GTP contacts are provided by residues alanine 17–threonine 24, aspartate 81–histidine 85, and asparagine 135–aspartate 138.

It belongs to the TRAFAC class translation factor GTPase superfamily. Classic translation factor GTPase family. EF-G/EF-2 subfamily.

It is found in the cytoplasm. Its function is as follows. Catalyzes the GTP-dependent ribosomal translocation step during translation elongation. During this step, the ribosome changes from the pre-translocational (PRE) to the post-translocational (POST) state as the newly formed A-site-bound peptidyl-tRNA and P-site-bound deacylated tRNA move to the P and E sites, respectively. Catalyzes the coordinated movement of the two tRNA molecules, the mRNA and conformational changes in the ribosome. The protein is Elongation factor G of Synechococcus sp. (strain RCC307).